The primary structure comprises 222 residues: MPLFQNATFFTTVNHLRDLPPTSAEIAFVGRSNAGKSSAINALANRTRLAYVSKTPGRTQHINFFRLASHFDYFLVDLPGYGYAEVPESVRAHWVELLGRYLQTRESLIGLLLIMDARHPLKELDMRMLDFFRMRGQPVHILLSKSDKMNRQEQNKTLATVRQALAGYPQVSIQLFSSSKKQGLEQVETVVAGWFAGLEARQADELTDGEPDDRTPDPDSAS.

The 176-residue stretch at 22-197 (TSAEIAFVGR…ETVVAGWFAG (176 aa)) folds into the EngB-type G domain. Mg(2+)-binding residues include Ser-37 and Thr-59. The tract at residues 201-222 (RQADELTDGEPDDRTPDPDSAS) is disordered. Residues 212-222 (DDRTPDPDSAS) show a composition bias toward basic and acidic residues.

This sequence belongs to the TRAFAC class TrmE-Era-EngA-EngB-Septin-like GTPase superfamily. EngB GTPase family. Mg(2+) is required as a cofactor.

Necessary for normal cell division and for the maintenance of normal septation. This Laribacter hongkongensis (strain HLHK9) protein is Probable GTP-binding protein EngB.